Here is a 255-residue protein sequence, read N- to C-terminus: Keratin-associated protein 10-2 (255 aa).

22 tandem repeats follow at residues 26–30 (CCELP), 36–40 (CCAPA), 57–61 (CCQAA), 79–83 (CCQQS), 89–93 (CCTSS), 99–103 (CCVPV), 104–108 (CCKPV), 109–113 (CCVPV), 114–118 (CCGAS), 120–124 (CCQQS), 130–134 (CCASS), 145–149 (CCKAV), 150–154 (CCVPT), 162–166 (CCQQS), 172–176 (CCTSS), 182–186 (CCVSV), 187–191 (CCKPV), 192–196 (CCKSI), 197–201 (CCVPV), 209–213 (CCQQS), 219–223 (CCTSS), and 224–228 (CCRPS). Residues 26–228 (CCELPCGTPS…CCTSSCCRPS (203 aa)) form a 22 X 5 AA repeats of C-C-X(3) region.

It belongs to the KRTAP type 10 family. In terms of assembly, interacts with hair keratins. Restricted to a narrow region of the hair fiber cuticle, lying approximately 20 cell layers above the apex of the dermal papilla of the hair root; not detected in any other tissues.

Functionally, in the hair cortex, hair keratin intermediate filaments are embedded in an interfilamentous matrix, consisting of hair keratin-associated proteins (KRTAP), which are essential for the formation of a rigid and resistant hair shaft through their extensive disulfide bond cross-linking with abundant cysteine residues of hair keratins. The matrix proteins include the high-sulfur and high-glycine-tyrosine keratins. This Homo sapiens (Human) protein is Keratin-associated protein 10-2 (KRTAP10-2).